A 154-amino-acid chain; its full sequence is Golgi-associated plant pathogenesis-related protein 1 (154 aa).

The interval 1–21 is disordered; that stretch reads MGKSASKQFHNEVLKAHNEYR. The N-myristoyl glycine moiety is linked to residue Gly2. The span at 9 to 21 shows a compositional bias: basic and acidic residues; that stretch reads FHNEVLKAHNEYR. The 119-residue stretch at 14–132 folds into the SCP domain; that stretch reads LKAHNEYRQK…SDGSSFVVAR (119 aa). A coiled-coil region spans residues 30–53; it reads KLCKNLNREAQQYSEALASTRILK. The segment at 91 to 98 is interaction with CAV1; the sequence is NFQQPGFT.

This sequence belongs to the CRISP family. Homodimer. Interacts with CAV1. Highest expression in lung and peripheral leukocytes, and minor expression in liver and kidney.

Its subcellular location is the golgi apparatus membrane. The sequence is that of Golgi-associated plant pathogenesis-related protein 1 (GLIPR2) from Homo sapiens (Human).